A 190-amino-acid polypeptide reads, in one-letter code: Small ribosomal subunit protein eS7 (190 aa).

This sequence belongs to the eukaryotic ribosomal protein eS7 family.

This Avicennia marina (Grey mangrove) protein is Small ribosomal subunit protein eS7 (RPS7).